We begin with the raw amino-acid sequence, 558 residues long: GPI mannosyltransferase 3 (558 aa).

Helical transmembrane passes span 53–73, 81–101, 164–184, and 190–210; these read GLRS…LKLL, VWFA…VSVF, AYCG…LLTL, and VPFL…AVVL. N-linked (GlcNAc...) asparagine glycosylation occurs at asparagine 220. Residues 234–254 traverse the membrane as a helical segment; it reads IVLTGLIVLVAVLGGVMVLDY. Asparagine 275 carries N-linked (GlcNAc...) asparagine glycosylation. The next 4 helical transmembrane spans lie at 292 to 312, 323 to 343, 348 to 368, and 372 to 392; these read VLVG…LVLW, PVLG…LIDH, FVFV…VRWS, and AVVV…IYLM.

Belongs to the glycosyltransferase 22 family. PIGB subfamily.

It is found in the endoplasmic reticulum membrane. Its pathway is glycolipid biosynthesis; glycosylphosphatidylinositol-anchor biosynthesis. In terms of biological role, mannosyltransferase involved in glycosylphosphatidylinositol-anchor biosynthesis. Transfers the third alpha-1,2-mannose to Man2-GlcN-acyl-PI during GPI precursor assembly. In Trypanosoma brucei brucei (strain 927/4 GUTat10.1), this protein is GPI mannosyltransferase 3 (GPI10).